The primary structure comprises 261 residues: uncharacterized protein (261 aa).

The protein belongs to the BtpA family.

This is an uncharacterized protein from Thermococcus kodakarensis (strain ATCC BAA-918 / JCM 12380 / KOD1) (Pyrococcus kodakaraensis (strain KOD1)).